The following is a 98-amino-acid chain: MEKHPADLYKDHVRPFLYSKLEEFKILGYDDVELESLWSYLTDKKWKKKTELSIYELASDILSVKIGEFMNYATVESFKTSNWLGSEEGQEALEELLR.

Interacts directly with DivIVA.

The protein localises to the cytoplasm. Its function is as follows. Required for post-transcription initiation control of the comE operon. Promotes the accumulation of its target comE mRNA to septal and polar sites. This chain is Post-transcriptional regulator ComN (comN), found in Bacillus subtilis (strain 168).